The sequence spans 264 residues: NADH-quinone oxidoreductase subunit B 1 (264 aa).

The [4Fe-4S] cluster site is built by cysteine 42, cysteine 43, cysteine 108, and cysteine 138.

This sequence belongs to the complex I 20 kDa subunit family. In terms of assembly, NDH-1 is composed of 14 different subunits. Subunits NuoB, C, D, E, F, and G constitute the peripheral sector of the complex. [4Fe-4S] cluster is required as a cofactor.

It is found in the cell membrane. It carries out the reaction a quinone + NADH + 5 H(+)(in) = a quinol + NAD(+) + 4 H(+)(out). Functionally, NDH-1 shuttles electrons from NADH, via FMN and iron-sulfur (Fe-S) centers, to quinones in the respiratory chain. The immediate electron acceptor for the enzyme in this species is believed to be ubiquinone. Couples the redox reaction to proton translocation (for every two electrons transferred, four hydrogen ions are translocated across the cytoplasmic membrane), and thus conserves the redox energy in a proton gradient. The polypeptide is NADH-quinone oxidoreductase subunit B 1 (Chloroflexus aurantiacus (strain ATCC 29366 / DSM 635 / J-10-fl)).